The chain runs to 654 residues: Protein THALLO (654 aa).

Residues 1 to 16 (MGKKGGTLKRSSKSTK) show a composition bias toward basic residues. 3 disordered regions span residues 1–23 (MGKK…DIVE), 35–145 (KQRD…SDDE), and 164–212 (SITA…KDTH). The Nuclear localization signal 1 motif lies at 2–9 (GKKGGTLK). Acidic residues-rich tracts occupy residues 44 to 56 (VNDD…EDDV), 64 to 82 (GVDD…EEAE), and 103 to 114 (GDDEMADDDKDK). The stretch at 140–160 (LSSDDEDIKAEEEEVIRLRAE) forms a coiled coil. The segment covering 171-181 (GLDDDSEEDSD) has biased composition (acidic residues). Residues 182 to 212 (RELTMEEISDKGKQATKSITDKKEKGDKDTH) show a composition bias toward basic and acidic residues. Positions 243–263 (LSELNDAVEELESKINPVMNK) form a coiled coil. Disordered stretches follow at residues 362–397 (SDSV…HQND), 470–492 (VSTK…DDIG), and 509–654 (KSSE…SIRM). Basic and acidic residues predominate over residues 364–387 (SVDRITQDTAKPMKIDNAREEKKK). The segment covering 524-546 (SDDEDDNDGDNNDMVDNDGESED) has biased composition (acidic residues). Positions 552 to 561 (VKQKQQAKRA) are enriched in basic residues. The span at 588–599 (SNQMVSNRGLTR) shows a compositional bias: polar residues. A Nuclear localization signal 2 motif is present at residues 608-615 (PRKKYRKN). Over residues 645–654 (NPNTSRSIRM) the composition is skewed to polar residues.

This sequence belongs to the SAS10 family. As to quaternary structure, interacts with NUCL1, NUCL2, JMJ14, NOF1 and MPP10 in the nucleus. In terms of tissue distribution, mainly present in tissues undergoing rapid cellular growth and differentiation. Mostly expressed in shoots and flowers, and, to a lower extent, in leaves, siliques, roots and seedlings.

Its subcellular location is the nucleus. It localises to the nucleolus. In terms of biological role, essential protein during embryogenesis. Involved both in gene transcription regulation and in processing events critical for proper rRNA biogenesis and nucleolar organization during reproduction; contributes to pre-rRNA processing at the 5' external transcribed spacer. Binds RNA. The protein is Protein THALLO of Arabidopsis thaliana (Mouse-ear cress).